A 94-amino-acid polypeptide reads, in one-letter code: Aspartyl/glutamyl-tRNA(Asn/Gln) amidotransferase subunit C (94 aa).

The protein belongs to the GatC family. In terms of assembly, heterotrimer of A, B and C subunits.

It catalyses the reaction L-glutamyl-tRNA(Gln) + L-glutamine + ATP + H2O = L-glutaminyl-tRNA(Gln) + L-glutamate + ADP + phosphate + H(+). The enzyme catalyses L-aspartyl-tRNA(Asn) + L-glutamine + ATP + H2O = L-asparaginyl-tRNA(Asn) + L-glutamate + ADP + phosphate + 2 H(+). Its function is as follows. Allows the formation of correctly charged Asn-tRNA(Asn) or Gln-tRNA(Gln) through the transamidation of misacylated Asp-tRNA(Asn) or Glu-tRNA(Gln) in organisms which lack either or both of asparaginyl-tRNA or glutaminyl-tRNA synthetases. The reaction takes place in the presence of glutamine and ATP through an activated phospho-Asp-tRNA(Asn) or phospho-Glu-tRNA(Gln). In Heliobacterium modesticaldum (strain ATCC 51547 / Ice1), this protein is Aspartyl/glutamyl-tRNA(Asn/Gln) amidotransferase subunit C.